The chain runs to 209 residues: Uracil phosphoribosyltransferase (209 aa).

5-phospho-alpha-D-ribose 1-diphosphate is bound by residues arginine 79, arginine 104, and 131–139 (DPMLATGAS). Uracil-binding positions include isoleucine 194 and 199-201 (GDA). Aspartate 200 serves as a coordination point for 5-phospho-alpha-D-ribose 1-diphosphate.

This sequence belongs to the UPRTase family. Mg(2+) is required as a cofactor.

It carries out the reaction UMP + diphosphate = 5-phospho-alpha-D-ribose 1-diphosphate + uracil. Its pathway is pyrimidine metabolism; UMP biosynthesis via salvage pathway; UMP from uracil: step 1/1. Its activity is regulated as follows. Allosterically activated by GTP. Functionally, catalyzes the conversion of uracil and 5-phospho-alpha-D-ribose 1-diphosphate (PRPP) to UMP and diphosphate. This chain is Uracil phosphoribosyltransferase, found in Staphylococcus carnosus (strain TM300).